We begin with the raw amino-acid sequence, 196 residues long: Molybdopterin synthase catalytic subunit (196 aa).

Residues 110–111, lysine 126, and 133–135 contribute to the substrate site; these read HR and KKE. The tract at residues 142-196 is disordered; it reads GGIWRANRDGAVGERVDEDEEKKKPDMGPHGPILRPSRPGERGHGPVVRNHQLGS. Residues 147–168 show a composition bias toward basic and acidic residues; the sequence is ANRDGAVGERVDEDEEKKKPDM.

Belongs to the MoaE family. MOCS2B subfamily. Heterotetramer; composed of 2 small (MOCS2A) and 2 large (MOCS2B) subunits.

The protein resides in the cytoplasm. The enzyme catalyses 2 [molybdopterin-synthase sulfur-carrier protein]-C-terminal-Gly-aminoethanethioate + cyclic pyranopterin phosphate + H2O = molybdopterin + 2 [molybdopterin-synthase sulfur-carrier protein]-C-terminal Gly-Gly + 2 H(+). It participates in cofactor biosynthesis; molybdopterin biosynthesis. In terms of biological role, catalytic subunit of the molybdopterin synthase complex, a complex that catalyzes the conversion of precursor Z into molybdopterin. Acts by mediating the incorporation of 2 sulfur atoms from thiocarboxylated MOCS2A into precursor Z to generate a dithiolene group. This chain is Molybdopterin synthase catalytic subunit, found in Sclerotinia sclerotiorum (strain ATCC 18683 / 1980 / Ss-1) (White mold).